We begin with the raw amino-acid sequence, 102 residues long: Small ribosomal subunit protein uS10 (102 aa).

The protein belongs to the universal ribosomal protein uS10 family. Part of the 30S ribosomal subunit.

Involved in the binding of tRNA to the ribosomes. This chain is Small ribosomal subunit protein uS10, found in Methylobacterium radiotolerans (strain ATCC 27329 / DSM 1819 / JCM 2831 / NBRC 15690 / NCIMB 10815 / 0-1).